The following is a 138-amino-acid chain: Large ribosomal subunit protein uL16 (138 aa).

Positions 1–15 are enriched in basic residues; it reads MLSPKKVKYRKKQRG. The tract at residues 1-21 is disordered; that stretch reads MLSPKKVKYRKKQRGRLSGEA.

This sequence belongs to the universal ribosomal protein uL16 family. In terms of assembly, part of the 50S ribosomal subunit.

Binds 23S rRNA and is also seen to make contacts with the A and possibly P site tRNAs. This Borrelia garinii subsp. bavariensis (strain ATCC BAA-2496 / DSM 23469 / PBi) (Borreliella bavariensis) protein is Large ribosomal subunit protein uL16.